The chain runs to 491 residues: N-succinylglutamate 5-semialdehyde dehydrogenase (491 aa).

223–228 is an NAD(+) binding site; sequence GSANTG. Residues glutamate 246 and cysteine 280 contribute to the active site.

Belongs to the aldehyde dehydrogenase family. AstD subfamily.

The enzyme catalyses N-succinyl-L-glutamate 5-semialdehyde + NAD(+) + H2O = N-succinyl-L-glutamate + NADH + 2 H(+). It functions in the pathway amino-acid degradation; L-arginine degradation via AST pathway; L-glutamate and succinate from L-arginine: step 4/5. Its function is as follows. Catalyzes the NAD-dependent reduction of succinylglutamate semialdehyde into succinylglutamate. This is N-succinylglutamate 5-semialdehyde dehydrogenase from Photorhabdus laumondii subsp. laumondii (strain DSM 15139 / CIP 105565 / TT01) (Photorhabdus luminescens subsp. laumondii).